Consider the following 150-residue polypeptide: Large ribosomal subunit protein bL9 (150 aa).

This sequence belongs to the bacterial ribosomal protein bL9 family.

Functionally, binds to the 23S rRNA. This Pseudoalteromonas translucida (strain TAC 125) protein is Large ribosomal subunit protein bL9.